Consider the following 215-residue polypeptide: Probable phosphoglycerate mutase GpmB (215 aa).

Substrate contacts are provided by residues 8-15, 21-22, Arg-58, Lys-60, 82-85, 104-105, and 151-152; these read RHGETQWN, QG, ELDM, RR, and GI. His-9 acts as the Tele-phosphohistidine intermediate in catalysis. Residue Glu-82 is the Proton donor/acceptor of the active site.

It belongs to the phosphoglycerate mutase family. GpmB subfamily.

It catalyses the reaction (2R)-2-phosphoglycerate = (2R)-3-phosphoglycerate. Its pathway is carbohydrate degradation; glycolysis; pyruvate from D-glyceraldehyde 3-phosphate: step 3/5. The sequence is that of Probable phosphoglycerate mutase GpmB from Salmonella agona (strain SL483).